The primary structure comprises 278 residues: Large ribosomal subunit protein uL2 (278 aa).

The tract at residues 201-278 (HGNINDGKAG…IMRSRHQKKK (78 aa)) is disordered. A compositionally biased stretch (basic residues) spans 210–221 (GRSRWRGKRPHV).

This sequence belongs to the universal ribosomal protein uL2 family. In terms of assembly, part of the 50S ribosomal subunit. Forms a bridge to the 30S subunit in the 70S ribosome.

One of the primary rRNA binding proteins. Required for association of the 30S and 50S subunits to form the 70S ribosome, for tRNA binding and peptide bond formation. It has been suggested to have peptidyltransferase activity; this is somewhat controversial. Makes several contacts with the 16S rRNA in the 70S ribosome. This Allorhizobium ampelinum (strain ATCC BAA-846 / DSM 112012 / S4) (Agrobacterium vitis (strain S4)) protein is Large ribosomal subunit protein uL2.